The following is a 218-amino-acid chain: Small ribosomal subunit protein uS3 (218 aa).

The region spanning 38–106 (IREYISKRLQ…RVHINIVEIK (69 aa)) is the KH type-2 domain.

This sequence belongs to the universal ribosomal protein uS3 family. Part of the 30S ribosomal subunit. Forms a tight complex with proteins S10 and S14.

Its function is as follows. Binds the lower part of the 30S subunit head. Binds mRNA in the 70S ribosome, positioning it for translation. The sequence is that of Small ribosomal subunit protein uS3 from Geobacillus kaustophilus (strain HTA426).